A 158-amino-acid chain; its full sequence is 6,7-dimethyl-8-ribityllumazine synthase (158 aa).

Residues phenylalanine 22, alanine 56–glutamate 58, and valine 80–isoleucine 82 each bind 5-amino-6-(D-ribitylamino)uracil. Glutamate 85–threonine 86 lines the (2S)-2-hydroxy-3-oxobutyl phosphate pocket. The active-site Proton donor is histidine 88. Asparagine 113 is a binding site for 5-amino-6-(D-ribitylamino)uracil. Arginine 127 provides a ligand contact to (2S)-2-hydroxy-3-oxobutyl phosphate.

Belongs to the DMRL synthase family.

It catalyses the reaction (2S)-2-hydroxy-3-oxobutyl phosphate + 5-amino-6-(D-ribitylamino)uracil = 6,7-dimethyl-8-(1-D-ribityl)lumazine + phosphate + 2 H2O + H(+). Its pathway is cofactor biosynthesis; riboflavin biosynthesis; riboflavin from 2-hydroxy-3-oxobutyl phosphate and 5-amino-6-(D-ribitylamino)uracil: step 1/2. Its function is as follows. Catalyzes the formation of 6,7-dimethyl-8-ribityllumazine by condensation of 5-amino-6-(D-ribitylamino)uracil with 3,4-dihydroxy-2-butanone 4-phosphate. This is the penultimate step in the biosynthesis of riboflavin. This chain is 6,7-dimethyl-8-ribityllumazine synthase, found in Neisseria meningitidis serogroup C / serotype 2a (strain ATCC 700532 / DSM 15464 / FAM18).